The following is an 855-amino-acid chain: Suppressor of tumorigenicity 14 protein homolog (855 aa).

The interval 1-21 is disordered; the sequence is MKSERARRGAGGSGDLGAGFK. The Cytoplasmic segment spans residues 1–55; sequence MKSERARRGAGGSGDLGAGFKYTSRPENMNGCEEGVEFLPANNSSKVEKGGPRRW. Ser-13 is modified (phosphoserine). Residues 56–76 traverse the membrane as a helical; Signal-anchor for type II membrane protein segment; the sequence is VVLMAVLAAFLALSLLAGLLA. Topologically, residues 77–855 are extracellular; it reads WHFQDRNVRV…RDWIKAQIGV (779 aa). An SEA domain is found at 86–203; the sequence is VQKIFNGYLS…TSVVAFPSDP (118 aa). Asn-109 is a glycosylation site (N-linked (GlcNAc...) asparagine). Cys-214 and Cys-244 are disulfide-bonded. 2 consecutive CUB domains span residues 214 to 334 and 340 to 447; these read CSFA…FFQL and CGGY…FLSF. N-linked (GlcNAc...) asparagine glycosylation is found at Asn-302 and Asn-365. 15 disulfide bridges follow: Cys-340–Cys-366, Cys-397–Cys-410, Cys-453–Cys-464, Cys-459–Cys-477, Cys-471–Cys-486, Cys-488–Cys-501, Cys-496–Cys-514, Cys-508–Cys-523, Cys-525–Cys-537, Cys-532–Cys-550, Cys-544–Cys-559, Cys-567–Cys-579, Cys-574–Cys-593, Cys-587–Cys-602, and Cys-641–Cys-657. 4 consecutive LDL-receptor class A domains span residues 452–487, 487–524, 524–560, and 566–603; these read PCPG…LDCK, KCNA…EGCS, SCPP…AKCQ, and PCTE…KDCD. Residue Asn-489 is glycosylated (N-linked (GlcNAc...) asparagine). In terms of domain architecture, Peptidase S1 spans 615–854; that stretch reads VVGGENSDQG…FRDWIKAQIG (240 aa). Residues His-656 and Asp-711 each act as charge relay system in the active site. Asn-772 is a glycosylation site (N-linked (GlcNAc...) asparagine). Intrachain disulfides connect Cys-776-Cys-790 and Cys-801-Cys-830. Residue Ser-805 is the Charge relay system of the active site.

The protein belongs to the peptidase S1 family. Interacts with CDCP1. May interact with TMEFF1.

Its subcellular location is the membrane. The catalysed reaction is Cleaves various synthetic substrates with Arg or Lys at the P1 position and prefers small side-chain amino acids, such as Ala and Gly, at the P2 position.. Functionally, exhibits trypsin-like activity as defined by cleavage of synthetic substrates with Arg or Lys as the P1 site. Involved in the terminal differentiation of keratinocytes through prostasin (PRSS8) activation and filaggrin (FLG) processing. Proteolytically cleaves and therefore activates TMPRSS13. The polypeptide is Suppressor of tumorigenicity 14 protein homolog (ST14) (Bos taurus (Bovine)).